Consider the following 540-residue polypeptide: Arylsulfatase K (540 aa).

The signal sequence occupies residues 1 to 22; the sequence is MLLLWVSVVAASALAAPAPGAD. Asp-44 and Cys-84 together coordinate Ca(2+). The active-site Nucleophile is the Cys-84. 3-oxoalanine (Cys) is present on Cys-84. Asn-112 carries N-linked (GlcNAc...) asparagine glycosylation. Residue Lys-132 coordinates substrate. A glycan (N-linked (GlcNAc...) asparagine) is linked at Asn-197. His-255 lines the substrate pocket. N-linked (GlcNAc...) asparagine glycosylation occurs at Asn-266. Residues Asp-317 and His-318 each coordinate Ca(2+). N-linked (GlcNAc...) asparagine glycans are attached at residues Asn-379, Asn-417, and Asn-502.

It belongs to the sulfatase family. The cofactor is Ca(2+). The conversion to 3-oxoalanine (also known as C-formylglycine, FGly), of a serine or cysteine residue in prokaryotes and of a cysteine residue in eukaryotes, is critical for catalytic activity. In terms of processing, the 75-kDa precursor undergoes proteolytic processing to yield a 23 kDa form. Post-translationally, N-glycosylated with both high mannose and complex type sugars.

Its subcellular location is the secreted. It is found in the lysosome. The enzyme catalyses an aryl sulfate + H2O = a phenol + sulfate + H(+). The catalysed reaction is Hydrolysis of the 2-sulfate groups of the 2-O-sulfo-D-glucuronate residues of chondroitin sulfate, heparin and heparitin sulfate.. Catalyzes the hydrolysis of pseudosubstrates such as p-nitrocatechol sulfate and p-nitrophenyl sulfate. Catalyzes the hydrolysis of the 2-sulfate groups of the 2-O-sulfo-D-glucuronate residues of chondroitin sulfate, heparin and heparitin sulfate. Acts selectively on 2-sulfoglucuronate and lacks activity against 2-sulfoiduronate. The polypeptide is Arylsulfatase K (ARSK) (Bos taurus (Bovine)).